The sequence spans 231 residues: Sugar fermentation stimulation protein homolog (231 aa).

This sequence belongs to the SfsA family.

The chain is Sugar fermentation stimulation protein homolog from Pyrobaculum islandicum (strain DSM 4184 / JCM 9189 / GEO3).